We begin with the raw amino-acid sequence, 92 residues long: Large ribosomal subunit protein eL43z (92 aa).

The C4-type zinc-finger motif lies at 39–60 (CEFCGKFAVKRKAVGIWGCKDC).

The protein belongs to the eukaryotic ribosomal protein eL43 family.

This Oryza sativa subsp. japonica (Rice) protein is Large ribosomal subunit protein eL43z.